The chain runs to 303 residues: 2-dehydropantoate 2-reductase (303 aa).

Residues 7-12, lysine 78, asparagine 103, and alanine 129 each bind NADP(+); that span reads GPGSLG. The Proton donor role is filled by lysine 185. Residues lysine 185, asparagine 189, asparagine 193, asparagine 203, and 252 to 255 contribute to the substrate site; that span reads NESS. Glutamate 267 provides a ligand contact to NADP(+).

It belongs to the ketopantoate reductase family.

Its subcellular location is the cytoplasm. It catalyses the reaction (R)-pantoate + NAD(+) = 2-dehydropantoate + NADH + H(+). It carries out the reaction (R)-pantoate + NADP(+) = 2-dehydropantoate + NADPH + H(+). Its pathway is cofactor biosynthesis; coenzyme A biosynthesis. In terms of biological role, catalyzes the NAD(P)H-dependent reduction of ketopantoate into pantoic acid. In Halobacterium salinarum (strain ATCC 700922 / JCM 11081 / NRC-1) (Halobacterium halobium), this protein is 2-dehydropantoate 2-reductase.